The chain runs to 179 residues: Replication restart protein DnaT (179 aa).

The span at 151–168 (SRSSNGGMPQRDINSVSE) shows a compositional bias: polar residues. The tract at residues 151 to 179 (SRSSNGGMPQRDINSVSEPDNHIPPGFRG) is disordered.

It belongs to the DnaT family. In terms of assembly, homooligomerizes. Interacts with PriB. Component of the replication restart primosome. Primosome assembly occurs via a 'hand-off' mechanism. PriA binds to replication forks, subsequently PriB then DnaT bind; DnaT then displaces ssDNA to generate the helicase loading substrate.

Functionally, involved in the restart of stalled replication forks, which reloads the replicative helicase on sites other than the origin of replication. Can function in multiple replication restart pathways. Displaces ssDNA from a PriB-ssDNA complex. Probably forms a spiral filament on ssDNA. The polypeptide is Replication restart protein DnaT (Salmonella heidelberg (strain SL476)).